Consider the following 292-residue polypeptide: Cyclin-dependent kinase 5 (292 aa).

Residues 4–286 (YEKLEKIGEG…AEEALQHPYF (283 aa)) enclose the Protein kinase domain. Residues 10 to 18 (IGEGTYGTV) and Lys-33 each bind ATP. Tyr-15 carries the post-translational modification Phosphotyrosine; by ABL1, EPHA4 and FYN. Residue Thr-17 is modified to Phosphothreonine. The residue at position 56 (Lys-56) is an N6-acetyllysine. Ser-72 carries the post-translational modification Phosphoserine. Catalysis depends on Asp-126, which acts as the Proton acceptor. At Ser-159 the chain carries Phosphoserine.

The protein belongs to the protein kinase superfamily. CMGC Ser/Thr protein kinase family. CDC2/CDKX subfamily. As to quaternary structure, heterodimer composed of a catalytic subunit CDK5 and a regulatory subunit CDK5R1 (p25) and macromolecular complex composed of at least CDK5, CDK5R1 (p35) and CDK5RAP1 or CDK5RAP2 or CDK5RAP3. Only the heterodimer shows kinase activity. Under neurotoxic stress and neuronal injury conditions, p35 is cleaved by calpain to generate p25 that hyperactivates CDK5, that becomes functionally disabled and often toxic. Found in a trimolecular complex with CABLES1 and ABL1. Interacts with CABLES1 and CABLES2. Interacts with AATK and GSTP1. Binds to HDAC1 when in complex with p25. Interaction with myristoylation p35 promotes CDK5 association with membranes. Both isoforms 1 and 2 interacts with beta-catenin/CTNNB1. Interacts with delta-catenin/CTNND2 and APEX1. Interacts with P53/TP53 in neurons. Interacts with EPHA4; may mediate the activation of NGEF by EPHA4. Interacts with PTK2/FAK1. The complex p35/CDK5 interacts with CLOCK. Interacts with HTR6. Phosphorylation on Tyr-15 by ABL1 and FYN, and on Ser-159 by casein kinase 1 promotes kinase activity. By contrast, phosphorylation at Thr-14 inhibits activity. Post-translationally, phosphorylation at Ser-159 is essential for maximal catalytic activity. Ubiquitously expressed. Accumulates in cortical neurons (at protein level). In terms of tissue distribution, expressed in the testis, skeletal muscle, colon, bone marrow and ovary.

Its subcellular location is the cytoplasm. The protein resides in the nucleus. It is found in the cell membrane. The protein localises to the perikaryon. It localises to the cell projection. Its subcellular location is the lamellipodium. The protein resides in the growth cone. It is found in the postsynaptic density. The protein localises to the synapse. The catalysed reaction is L-seryl-[protein] + ATP = O-phospho-L-seryl-[protein] + ADP + H(+). The enzyme catalyses L-threonyl-[protein] + ATP = O-phospho-L-threonyl-[protein] + ADP + H(+). With respect to regulation, inhibited by 2-(1-ethyl-2-hydroxyethylamino)-6-benzylamino-9-isopropylpurine (roscovitine), 1-isopropyl-4-aminobenzyl-6-ether-linked benzimidazoles, resveratrol, AT-7519 and olomoucine. Activated by CDK5R1 (p35) and CDK5R2 (p39) during the development of the nervous system; degradation of CDK5R1 (p35) and CDK5R2 (p39) by proteasome result in down regulation of kinase activity, during this process, CDK5 phosphorylates p35 and induces its ubiquitination and subsequent degradation. Kinase activity is mainly determined by the amount of p35 available and subcellular location; reversible association to plasma membrane inhibits activity. Long-term inactivation as well as CDK5R1 (p25)-mediated hyperactivation of CDK5 triggers cell death. The pro-death activity of hyperactivated CDK5 is suppressed by membrane association of CDK5, via myristoylation of p35. Brain-derived neurotrophic factor, glial-derived neurotrophic factor, nerve growth factor (NGF), retinoic acid, laminin and neuregulin promote activity. Neurotoxicity enhances nuclear activity, thus leading to MEF2 phosphorylation and inhibition prior to apoptosis of cortical neurons. Repression by GSTP1 via p25/p35 translocation prevents neurodegeneration. Its function is as follows. Proline-directed serine/threonine-protein kinase essential for neuronal cell cycle arrest and differentiation and may be involved in apoptotic cell death in neuronal diseases by triggering abortive cell cycle re-entry. Interacts with D1 and D3-type G1 cyclins. Phosphorylates SRC, NOS3, VIM/vimentin, p35/CDK5R1, MEF2A, SIPA1L1, SH3GLB1, PXN, PAK1, MCAM/MUC18, SEPT5, SYN1, DNM1, AMPH, SYNJ1, CDK16, RAC1, RHOA, CDC42, TONEBP/NFAT5, MAPT/TAU, MAP1B, histone H1, p53/TP53, HDAC1, APEX1, PTK2/FAK1, huntingtin/HTT, ATM, MAP2, NEFH and NEFM. Regulates several neuronal development and physiological processes including neuronal survival, migration and differentiation, axonal and neurite growth, synaptogenesis, oligodendrocyte differentiation, synaptic plasticity and neurotransmission, by phosphorylating key proteins. Negatively regulates the CACNA1B/CAV2.2 -mediated Ca(2+) release probability at hippocampal neuronal soma and synaptic terminals. Activated by interaction with CDK5R1 (p35) and CDK5R2 (p39), especially in postmitotic neurons, and promotes CDK5R1 (p35) expression in an autostimulation loop. Phosphorylates many downstream substrates such as Rho and Ras family small GTPases (e.g. PAK1, RAC1, RHOA, CDC42) or microtubule-binding proteins (e.g. MAPT/TAU, MAP2, MAP1B), and modulates actin dynamics to regulate neurite growth and/or spine morphogenesis. Also phosphorylates exocytosis associated proteins such as MCAM/MUC18, SEPT5, SYN1, and CDK16/PCTAIRE1 as well as endocytosis associated proteins such as DNM1, AMPH and SYNJ1 at synaptic terminals. In the mature central nervous system (CNS), regulates neurotransmitter movements by phosphorylating substrates associated with neurotransmitter release and synapse plasticity; synaptic vesicle exocytosis, vesicles fusion with the presynaptic membrane, and endocytosis. Promotes cell survival by activating anti-apoptotic proteins BCL2 and STAT3, and negatively regulating of JNK3/MAPK10 activity. Phosphorylation of p53/TP53 in response to genotoxic and oxidative stresses enhances its stabilization by preventing ubiquitin ligase-mediated proteasomal degradation, and induces transactivation of p53/TP53 target genes, thus regulating apoptosis. Phosphorylation of p35/CDK5R1 enhances its stabilization by preventing calpain-mediated proteolysis producing p25/CDK5R1 and avoiding ubiquitin ligase-mediated proteasomal degradation. During aberrant cell-cycle activity and DNA damage, p25/CDK5 activity elicits cell-cycle activity and double-strand DNA breaks that precedes neuronal death by deregulating HDAC1. DNA damage triggered phosphorylation of huntingtin/HTT in nuclei of neurons protects neurons against polyglutamine expansion as well as DNA damage mediated toxicity. Phosphorylation of PXN reduces its interaction with PTK2/FAK1 in matrix-cell focal adhesions (MCFA) during oligodendrocytes (OLs) differentiation. Negative regulator of Wnt/beta-catenin signaling pathway. Activator of the GAIT (IFN-gamma-activated inhibitor of translation) pathway, which suppresses expression of a post-transcriptional regulon of proinflammatory genes in myeloid cells; phosphorylates the linker domain of glutamyl-prolyl tRNA synthetase (EPRS) in a IFN-gamma-dependent manner, the initial event in assembly of the GAIT complex. Phosphorylation of SH3GLB1 is required for autophagy induction in starved neurons. Phosphorylation of TONEBP/NFAT5 in response to osmotic stress mediates its rapid nuclear localization. MEF2 is inactivated by phosphorylation in nucleus in response to neurotoxin, thus leading to neuronal apoptosis. APEX1 AP-endodeoxyribonuclease is repressed by phosphorylation, resulting in accumulation of DNA damage and contributing to neuronal death. NOS3 phosphorylation down regulates NOS3-derived nitrite (NO) levels. SRC phosphorylation mediates its ubiquitin-dependent degradation and thus leads to cytoskeletal reorganization. May regulate endothelial cell migration and angiogenesis via the modulation of lamellipodia formation. Involved in dendritic spine morphogenesis by mediating the EFNA1-EPHA4 signaling. The complex p35/CDK5 participates in the regulation of the circadian clock by modulating the function of CLOCK protein: phosphorylates CLOCK at 'Thr-451' and 'Thr-461' and regulates the transcriptional activity of the CLOCK-BMAL1 heterodimer in association with altered stability and subcellular distribution. This is Cyclin-dependent kinase 5 from Homo sapiens (Human).